Reading from the N-terminus, the 257-residue chain is Nuclear receptor subfamily 0 group B member 2 (257 aa).

Residues 16–257 (SRPAILYALL…GLLGDMLLLR (242 aa)) enclose the NR LBD domain. The residue at position 57 (R57) is a Symmetric dimethylarginine; by PRMT5.

The protein belongs to the nuclear hormone receptor family. NR0 subfamily. In terms of assembly, interacts (via N-terminus) with NEUROD1 (via N-terminus and C-terminus). Interacts with ID2. Interacts with RORG, NFIL3, NR1D1 and BHLHE41. Heterodimer; efficient DNA binding requires dimerization with another bHLH protein. Interacts with RARA, RXRA, THRB, NR5A1, NR5A2, NR1I3, PPARA, PPARG and EID1. Interacts with HNF4A; the resulting heterodimer is transcriptionally inactive. Interacts with DDX3X; this interaction disrupts the interaction between HNF4 and NR0B2/SHP that forms inactive heterodimers and enhances the formation of active HNF4 homodimers. In terms of processing, arginine methylation by PRMT5 enhances repression activity of metabolic genes in liver in response to bile acid signaling, by increasing interaction with cofactors. In terms of tissue distribution, liver. Low levels of expression were detected in heart and pancreas.

The protein localises to the nucleus. It localises to the cytoplasm. In terms of biological role, transcriptional regulator that acts as a negative regulator of receptor-dependent signaling pathways. Specifically inhibits transactivation of the nuclear receptor with which it interacts. Inhibits transcriptional activity of NEUROD1 on E-box-containing promoter by interfering with the coactivation function of the p300/CBP-mediated transcription complex for NEUROD1. Essential component of the liver circadian clock which via its interaction with NR1D1 and RORG regulates NPAS2-mediated hepatic lipid metabolism. Regulates the circadian expression of cytochrome P450 (CYP) enzymes. Represses: NR5A2 and HNF4A to down-regulate CYP2C38, NFLI3 to up-regulate CYP2A5, BHLHE41/HNF1A axis to up-regulate CYP1A2, CYP2E1 and CYP3A11, and NR1D1 to up-regulate CYP2B10, CYP4A10 and CYP4A14. The chain is Nuclear receptor subfamily 0 group B member 2 (NR0B2) from Homo sapiens (Human).